A 337-amino-acid polypeptide reads, in one-letter code: Peroxidase 14 (337 aa).

An N-terminal signal peptide occupies residues 1-22 (MARIGSFLILLSLTYALTLCIC). Asparagine 24 carries N-linked (GlcNAc...) asparagine glycosylation. Disulfide bonds link cysteine 44–cysteine 124, cysteine 77–cysteine 82, cysteine 130–cysteine 331, and cysteine 209–cysteine 241. Histidine 75 serves as the catalytic Proton acceptor. The Ca(2+) site is built by aspartate 76, valine 79, glycine 81, aspartate 83, and serine 85. Residue proline 172 coordinates substrate. N-linked (GlcNAc...) asparagine glycosylation occurs at asparagine 191. Histidine 202 serves as a coordination point for heme b. Threonine 203 serves as a coordination point for Ca(2+). N-linked (GlcNAc...) asparagine glycosylation is found at asparagine 218 and asparagine 249. Residues aspartate 254, serine 257, and aspartate 262 each coordinate Ca(2+).

The protein belongs to the peroxidase family. Classical plant (class III) peroxidase subfamily. Heme b is required as a cofactor. The cofactor is Ca(2+).

It localises to the secreted. The enzyme catalyses 2 a phenolic donor + H2O2 = 2 a phenolic radical donor + 2 H2O. Removal of H(2)O(2), oxidation of toxic reductants, biosynthesis and degradation of lignin, suberization, auxin catabolism, response to environmental stresses such as wounding, pathogen attack and oxidative stress. These functions might be dependent on each isozyme/isoform in each plant tissue. The polypeptide is Peroxidase 14 (PER14) (Arabidopsis thaliana (Mouse-ear cress)).